Here is a 164-residue protein sequence, read N- to C-terminus: UPF0304 protein YfbU (164 aa).

It belongs to the UPF0304 family.

In Shigella flexneri serotype 5b (strain 8401), this protein is UPF0304 protein YfbU.